A 526-amino-acid polypeptide reads, in one-letter code: Bifunctional purine biosynthesis protein PurH (526 aa).

In terms of domain architecture, MGS-like spans methionine 1 to isoleucine 145.

This sequence belongs to the PurH family.

The enzyme catalyses (6R)-10-formyltetrahydrofolate + 5-amino-1-(5-phospho-beta-D-ribosyl)imidazole-4-carboxamide = 5-formamido-1-(5-phospho-D-ribosyl)imidazole-4-carboxamide + (6S)-5,6,7,8-tetrahydrofolate. It catalyses the reaction IMP + H2O = 5-formamido-1-(5-phospho-D-ribosyl)imidazole-4-carboxamide. It participates in purine metabolism; IMP biosynthesis via de novo pathway; 5-formamido-1-(5-phospho-D-ribosyl)imidazole-4-carboxamide from 5-amino-1-(5-phospho-D-ribosyl)imidazole-4-carboxamide (10-formyl THF route): step 1/1. Its pathway is purine metabolism; IMP biosynthesis via de novo pathway; IMP from 5-formamido-1-(5-phospho-D-ribosyl)imidazole-4-carboxamide: step 1/1. The polypeptide is Bifunctional purine biosynthesis protein PurH (Polynucleobacter necessarius subsp. necessarius (strain STIR1)).